The following is a 125-amino-acid chain: UPF0102 protein Rpic_3463 (125 aa).

Belongs to the UPF0102 family.

The chain is UPF0102 protein Rpic_3463 from Ralstonia pickettii (strain 12J).